Consider the following 337-residue polypeptide: Eukaryotic translation initiation factor 3 subunit H (337 aa).

In terms of domain architecture, MPN spans 21-153; sequence VQCDGLAVMK…LKAYRLTPQA (133 aa).

This sequence belongs to the eIF-3 subunit H family. As to quaternary structure, component of the eukaryotic translation initiation factor 3 (eIF-3) complex.

The protein resides in the cytoplasm. Functionally, component of the eukaryotic translation initiation factor 3 (eIF-3) complex, which is involved in protein synthesis of a specialized repertoire of mRNAs and, together with other initiation factors, stimulates binding of mRNA and methionyl-tRNAi to the 40S ribosome. The eIF-3 complex specifically targets and initiates translation of a subset of mRNAs involved in cell proliferation. The protein is Eukaryotic translation initiation factor 3 subunit H of Bombyx mori (Silk moth).